The primary structure comprises 372 residues: GDP-mannose transporter GONST3 (372 aa).

Transmembrane regions (helical) follow at residues 33 to 53, 60 to 80, 92 to 112, 125 to 145, 155 to 175, 177 to 197, 209 to 229, 251 to 271, 280 to 300, and 303 to 323; these read ASVY…SIIN, FPYP…GVLL, LNLL…LSLF, TFIV…TLFL, WGSL…DYQF, IAAY…FVYI, WGLV…ELLI, VVLP…FGFS, GFTV…LMVW, and HSTF…VMYQ. The tract at residues 331–372 is disordered; sequence NATQEAKPQEQDEEQEKLLEMQENKESNSVDIKETLKSEEKL. A compositionally biased stretch (basic and acidic residues) spans 346–372; it reads EKLLEMQENKESNSVDIKETLKSEEKL.

The protein belongs to the nucleotide-sugar transporter family. GDP-Mannose:GMP antiporter (GMA) (TC 2.A.7.13) subfamily. As to expression, expressed in rosette leaves, stems, flowers and siliques.

The protein localises to the golgi apparatus membrane. GDP-mannose transporter that may be involved in the import of GDP-mannose from the cytoplasm into the Golgi lumen. The protein is GDP-mannose transporter GONST3 of Arabidopsis thaliana (Mouse-ear cress).